Here is a 95-residue protein sequence, read N- to C-terminus: Putative RelE-like toxin protein (95 aa).

Belongs to the RelE toxin family.

Functionally, toxic component of a type II toxin-antitoxin (TA) system. In Escherichia coli, this protein is Putative RelE-like toxin protein.